Consider the following 223-residue polypeptide: Translation initiation factor 6 (223 aa).

Belongs to the eIF-6 family.

In terms of biological role, binds to the 50S ribosomal subunit and prevents its association with the 30S ribosomal subunit to form the 70S initiation complex. In Saccharolobus islandicus (strain Y.N.15.51 / Yellowstone #2) (Sulfolobus islandicus), this protein is Translation initiation factor 6.